The sequence spans 193 residues: Acyl carrier protein phosphodiesterase (193 aa).

This sequence belongs to the AcpH family.

It catalyses the reaction holo-[ACP] + H2O = apo-[ACP] + (R)-4'-phosphopantetheine + H(+). Functionally, converts holo-ACP to apo-ACP by hydrolytic cleavage of the phosphopantetheine prosthetic group from ACP. The polypeptide is Acyl carrier protein phosphodiesterase (Klebsiella pneumoniae (strain 342)).